The sequence spans 99 residues: Large ribosomal subunit protein bL28 (99 aa).

This sequence belongs to the bacterial ribosomal protein bL28 family.

This Rhizobium etli (strain CIAT 652) protein is Large ribosomal subunit protein bL28.